The following is a 247-amino-acid chain: Carboxy-S-adenosyl-L-methionine synthase (247 aa).

S-adenosyl-L-methionine contacts are provided by residues Tyr39, 64–66, 89–90, 117–118, Asn132, and Arg199; these read GCS, DN, and DI.

This sequence belongs to the class I-like SAM-binding methyltransferase superfamily. Cx-SAM synthase family. Homodimer.

The enzyme catalyses prephenate + S-adenosyl-L-methionine = carboxy-S-adenosyl-L-methionine + 3-phenylpyruvate + H2O. Functionally, catalyzes the conversion of S-adenosyl-L-methionine (SAM) to carboxy-S-adenosyl-L-methionine (Cx-SAM). This chain is Carboxy-S-adenosyl-L-methionine synthase, found in Klebsiella pneumoniae (strain 342).